Reading from the N-terminus, the 65-residue chain is Large ribosomal subunit protein bL35 (65 aa).

Positions 1-26 (MPKIKTLRSAAKRFKKTESGKFKRKQ) are disordered.

Belongs to the bacterial ribosomal protein bL35 family.

This Buchnera aphidicola subsp. Baizongia pistaciae (strain Bp) protein is Large ribosomal subunit protein bL35.